Here is a 490-residue protein sequence, read N- to C-terminus: MAHFPDTSGMTGVLRPLRIEGDILDLEVEGEIPAQLDGTFHRVHPDAQFPPRFEDDQFFNGDGMVSLFRFHDGKIDFRQRYAQTDKWKVERKAGKSLFGAYRNPLTDDASVQGMIRGTANTNVMVHAGKLYAMKEDSPCLIMDPLTLETEGYTNFDGKLKNQTFSAHAKIDPVTGNFCNFGYAATGLLTTDCSYFEIDPAGNLLFETEFQVPYYCMMHDYGLTEHYAIFHIVPCSPNWDRLKAGLPHFGFDTTLPVWLGVVPRGPGVTNKDVRWFKAPKTIFASHVMNAFEEGSKIHFDTPQAENNAFPFFPDIHGAPFDPVAARPYLHRWTVDLGSNSEDFAEVRQLTSWIDEFPRVDARYVGQPYRHGWGLVMDPEMEMEFARGRASGFKMNRIGHWDHATGKEDSWWCGPQSIIQEPCFVPRMADSAEGDGYIIALVDNLITNYSDLVVLDALNLKDGPIGRAKLPIRLRSGLHGNWADASKLPIAA.

The Fe cation site is built by His-167, His-218, His-285, and His-477.

This sequence belongs to the carotenoid oxygenase family. Homodimer of two beta subunits. Requires Fe(2+) as cofactor.

It carries out the reaction 1,2-bis(4-hydroxy-3-methoxyphenyl)ethylene + O2 = 2 vanillin. Activity is high with beta-5 type stilbene and minimal with beta-1 type stilbene. A 4-hydroxyl group and trans-stilbene structure is essential for the binding of substrates to the enzyme. Functionally, catalyzes the cleavage of the interphenyl double bond (C alpha-C beta) of lignin-derived polyphenolic diaryl-propane type compounds (Stilbene). The sequence is that of Lignostilbene-alpha,beta-dioxygenase isozyme III from Sphingomonas paucimobilis (Pseudomonas paucimobilis).